The following is a 565-amino-acid chain: MSRSLSECIDQGRGLVPADLVLKHGRVFDLVTGELVQTDVAICGDRIVGTFGTYTGRREIDCRGRILVPGFIDTHLHVESSLVTPFEFDRCVTPRGITTAICDPHEIANVCGLEGIRYFLEASAHLVMDLRVQLSSCVPSTHMETAGAALEAKDLAPLLDHPRVIGLAEFMNFPGVLMKDPGCMAKLEAFRGRHIDGHAPLLRGKDLNGYIAAGIRTEHEATTADEALEKLRKGMRVLIREGSVSKDLHALVSILTERHAPYLCLCTDDRNPLDIAEHGHIDHMIRTAIRLGAPPLAVYRAASLSAAEAFGLKDRGLIAPGRRADIAVLDSLEGCHAALVLAGGVVADDAAFSARSGVEPVARASVKVAEIAPEAFRCPGNRAETPVIGILPGKIITEHLTAEIEPVDGDKRPDPARDLARIAVIERHGKTGGRATGFVQGFGMARGAIASTVCHDHHNLAVVGIDYADMALAANRLRALEGGFAVAAGGEILAELALPVGGLMSLRPFEEVRDALVTLREAARSLGVTLEEPFLQLAFLALPVIPHLKITDRGMVDVDRFEILP.

It belongs to the metallo-dependent hydrolases superfamily. Adenine deaminase family. The cofactor is Mn(2+).

It carries out the reaction adenine + H2O + H(+) = hypoxanthine + NH4(+). This is Adenine deaminase from Cereibacter sphaeroides (strain KD131 / KCTC 12085) (Rhodobacter sphaeroides).